Consider the following 174-residue polypeptide: Dual-action ribosomal maturation protein DarP (174 aa).

This sequence belongs to the DarP family.

It is found in the cytoplasm. In terms of biological role, member of a network of 50S ribosomal subunit biogenesis factors which assembles along the 30S-50S interface, preventing incorrect 23S rRNA structures from forming. Promotes peptidyl transferase center (PTC) maturation. The protein is Dual-action ribosomal maturation protein DarP of Pseudomonas aeruginosa (strain LESB58).